The primary structure comprises 73 residues: Large ribosomal subunit protein bL31 (73 aa).

Belongs to the bacterial ribosomal protein bL31 family. Type A subfamily. In terms of assembly, part of the 50S ribosomal subunit.

Its function is as follows. Binds the 23S rRNA. The sequence is that of Large ribosomal subunit protein bL31 from Cereibacter sphaeroides (strain ATCC 17029 / ATH 2.4.9) (Rhodobacter sphaeroides).